A 223-amino-acid chain; its full sequence is Glycoprotein 42 (223 aa).

The Intravirion segment spans residues 1–8; sequence MVSFKQVR. The helical transmembrane segment at 9–29 threads the bilayer; it reads VPLFTAIALVIVLLLAYFLPP. The Virion surface segment spans residues 30–223; it reads RVRGGGRVAA…CLCVSQRSNS (194 aa). Intrachain disulfides connect Cys-99/Cys-138, Cys-102/Cys-115, Cys-128/Cys-214, Cys-132/Cys-216, and Cys-192/Cys-208. The C-type lectin domain maps to 111–217; that stretch reads YKGCCFYFTK…CSFLKPCLCV (107 aa).

It belongs to the epstein barr virus gp42 family. Forms a complex with gp25 and gp85 via its N-terminus; this complex is used for invasion of B-lymphocytes. Interacts with human HLA-DRA and HLA-DRB1.

The protein resides in the virion membrane. It is found in the host membrane. Functionally, plays a role in virion attachment to host B-lymphocytes, through binding to leukocyte antigen (HLA) class II and subsequently participates in fusion of the virion with host membranes. May act as a tropism switch that directs fusion with B-lymphocytes and inhibits fusion with epithelial cells. Additionally, hampers T-cell recognition via HLA class II molecules through steric hindrance of T-cell receptor-class II-peptide interaction. Its function is as follows. Soluble gp42 inhibits HLA class II-restricted antigen presentation to T-cells through binding to immature and mature HLA class II complexes. The protein is Glycoprotein 42 of Epstein-Barr virus (strain B95-8) (HHV-4).